The sequence spans 150 residues: Transcriptional repressor NrdR (150 aa).

A zinc finger lies at 3 to 34 (CPFCNFEESKVVDSRATDDNTTIRRRRECLNC). One can recognise an ATP-cone domain in the interval 49–139 (VLVVKKDLTR…VYRQFKDINT (91 aa)).

The protein belongs to the NrdR family. Zn(2+) serves as cofactor.

Its function is as follows. Negatively regulates transcription of bacterial ribonucleotide reductase nrd genes and operons by binding to NrdR-boxes. The polypeptide is Transcriptional repressor NrdR (Clostridium botulinum (strain Alaska E43 / Type E3)).